The primary structure comprises 217 residues: Protein MODIFYING WALL LIGNIN-2 (217 aa).

The N-terminal stretch at 1–23 (MHNLFLYSVVFSLGLVSFITCFA) is a signal peptide. Topologically, residues 24–51 (AEFKRTQKEDIRWDTERNCYVPGSHAFG) are cytoplasmic. A helical membrane pass occupies residues 52–72 (LGSAAVLCFCLAQIVGNIVVF). The Extracellular segment spans residues 73–94 (RNHRTRTKREDGYKITDLTLPT). Residues 95 to 115 (VLLLLSWSNFVVVVLILSTAI) form a helical membrane-spanning segment. The Cytoplasmic portion of the chain corresponds to 116 to 137 (SMSRAQAYGEGWLDEDCYLVKD). The chain crosses the membrane as a helical span at residues 138–158 (GVFAASGCLAILGLGALTISA). The Extracellular portion of the chain corresponds to 159 to 217 (TRIKVKKQQQLVQVVIKDQNQDQRRSMEEEQKHDEHQTNKSESVIHLVEEVSSTNISRI). 2 N-linked (GlcNAc...) asparagine glycosylation sites follow: Asn197 and Asn213.

It belongs to the DESIGUAL family.

It localises to the cell membrane. In terms of biological role, together with MWL1, contributes to secondary cell wall biology, specifically lignin biosynthesis. This is Protein MODIFYING WALL LIGNIN-2 from Arabidopsis thaliana (Mouse-ear cress).